Consider the following 340-residue polypeptide: tRNA N6-adenosine threonylcarbamoyltransferase (340 aa).

His-111 and His-115 together coordinate Fe cation. Residues 134-138 (LVSGG), Asp-167, Gly-180, and Asn-276 contribute to the substrate site. Residue Asp-304 coordinates Fe cation.

This sequence belongs to the KAE1 / TsaD family. Fe(2+) is required as a cofactor.

It localises to the cytoplasm. The enzyme catalyses L-threonylcarbamoyladenylate + adenosine(37) in tRNA = N(6)-L-threonylcarbamoyladenosine(37) in tRNA + AMP + H(+). Functionally, required for the formation of a threonylcarbamoyl group on adenosine at position 37 (t(6)A37) in tRNAs that read codons beginning with adenine. Is involved in the transfer of the threonylcarbamoyl moiety of threonylcarbamoyl-AMP (TC-AMP) to the N6 group of A37, together with TsaE and TsaB. TsaD likely plays a direct catalytic role in this reaction. This is tRNA N6-adenosine threonylcarbamoyltransferase from Helicobacter pylori (strain Shi470).